The primary structure comprises 383 residues: 8-amino-7-oxononanoate synthase (383 aa).

Position 21 (R21) interacts with substrate. Residue 108-109 (GF) participates in pyridoxal 5'-phosphate binding. H133 serves as a coordination point for substrate. The pyridoxal 5'-phosphate site is built by S179, H207, and T233. K236 carries the N6-(pyridoxal phosphate)lysine modification. Residue T350 participates in substrate binding.

This sequence belongs to the class-II pyridoxal-phosphate-dependent aminotransferase family. BioF subfamily. In terms of assembly, homodimer. Pyridoxal 5'-phosphate serves as cofactor.

It catalyses the reaction 6-carboxyhexanoyl-[ACP] + L-alanine + H(+) = (8S)-8-amino-7-oxononanoate + holo-[ACP] + CO2. It functions in the pathway cofactor biosynthesis; biotin biosynthesis. Its function is as follows. Catalyzes the decarboxylative condensation of pimeloyl-[acyl-carrier protein] and L-alanine to produce 8-amino-7-oxononanoate (AON), [acyl-carrier protein], and carbon dioxide. This is 8-amino-7-oxononanoate synthase from Cronobacter sakazakii (strain ATCC BAA-894) (Enterobacter sakazakii).